The following is a 134-amino-acid chain: Cytochrome b (134 aa).

A run of 3 helical transmembrane segments spans residues 33–53 (FGSLLGVCLGVQILTGLFLAM), 77–98 (WLLRYLHANGASMFFICLYLHV), and 113–133 (WNIGILLLFAVMATDFMGYVL). Residues His83 and His97 each contribute to the heme b site.

This sequence belongs to the cytochrome b family. The cytochrome bc1 complex contains 11 subunits: 3 respiratory subunits (MT-CYB, CYC1 and UQCRFS1), 2 core proteins (UQCRC1 and UQCRC2) and 6 low-molecular weight proteins (UQCRH/QCR6, UQCRB/QCR7, UQCRQ/QCR8, UQCR10/QCR9, UQCR11/QCR10 and a cleavage product of UQCRFS1). This cytochrome bc1 complex then forms a dimer. Requires heme b as cofactor.

It is found in the mitochondrion inner membrane. Functionally, component of the ubiquinol-cytochrome c reductase complex (complex III or cytochrome b-c1 complex) that is part of the mitochondrial respiratory chain. The b-c1 complex mediates electron transfer from ubiquinol to cytochrome c. Contributes to the generation of a proton gradient across the mitochondrial membrane that is then used for ATP synthesis. The protein is Cytochrome b (MT-CYB) of Sturnira tildae (Tilda's yellow-shouldered bat).